We begin with the raw amino-acid sequence, 175 residues long: Urease accessory protein UreE (175 aa).

The disordered stretch occupies residues 134–175 (FQPESGAYGGGHHHGDESATDLHNPGHGPHRSVPKIHEFKPR).

The protein belongs to the UreE family.

The protein localises to the cytoplasm. Functionally, involved in urease metallocenter assembly. Binds nickel. Probably functions as a nickel donor during metallocenter assembly. The polypeptide is Urease accessory protein UreE (Dechloromonas aromatica (strain RCB)).